Consider the following 314-residue polypeptide: Olfactory receptor 4Q2 (314 aa).

Over Met-1–Gly-26 the chain is Extracellular. N-linked (GlcNAc...) asparagine glycosylation occurs at Asn-4. Residues Leu-27–Val-47 traverse the membrane as a helical segment. The Cytoplasmic segment spans residues Thr-48–Tyr-61. The chain crosses the membrane as a helical span at residues Phe-62 to Ala-84. The Extracellular segment spans residues Asp-85–Cys-98. A disulfide bond links Cys-98 and Cys-181. A helical membrane pass occupies residues Ile-99–Met-119. At Ala-120–Cys-142 the chain is on the cytoplasmic side. The chain crosses the membrane as a helical span at residues Cys-143 to Leu-163. The Extracellular portion of the chain corresponds to Thr-164–Val-196. The helical transmembrane segment at Ile-197–Ile-217 threads the bilayer. Topologically, residues Ser-218 to Ala-236 are cytoplasmic. Residues Leu-237–Ile-257 traverse the membrane as a helical segment. The Extracellular portion of the chain corresponds to Tyr-258–Asp-268. Residues Lys-269 to Leu-289 form a helical membrane-spanning segment. Over Arg-290–Thr-314 the chain is Cytoplasmic.

It belongs to the G-protein coupled receptor 1 family.

Its subcellular location is the cell membrane. Odorant receptor. This chain is Olfactory receptor 4Q2 (OR4Q2), found in Homo sapiens (Human).